Consider the following 572-residue polypeptide: Proline--tRNA ligase (572 aa).

It belongs to the class-II aminoacyl-tRNA synthetase family. ProS type 1 subfamily. As to quaternary structure, homodimer.

The protein resides in the cytoplasm. It carries out the reaction tRNA(Pro) + L-proline + ATP = L-prolyl-tRNA(Pro) + AMP + diphosphate. Functionally, catalyzes the attachment of proline to tRNA(Pro) in a two-step reaction: proline is first activated by ATP to form Pro-AMP and then transferred to the acceptor end of tRNA(Pro). As ProRS can inadvertently accommodate and process non-cognate amino acids such as alanine and cysteine, to avoid such errors it has two additional distinct editing activities against alanine. One activity is designated as 'pretransfer' editing and involves the tRNA(Pro)-independent hydrolysis of activated Ala-AMP. The other activity is designated 'posttransfer' editing and involves deacylation of mischarged Ala-tRNA(Pro). The misacylated Cys-tRNA(Pro) is not edited by ProRS. The polypeptide is Proline--tRNA ligase (Escherichia coli O127:H6 (strain E2348/69 / EPEC)).